Consider the following 100-residue polypeptide: Urease subunit gamma (100 aa).

This sequence belongs to the urease gamma subunit family. Heterotrimer of UreA (gamma), UreB (beta) and UreC (alpha) subunits. Three heterotrimers associate to form the active enzyme.

The protein resides in the cytoplasm. The catalysed reaction is urea + 2 H2O + H(+) = hydrogencarbonate + 2 NH4(+). It participates in nitrogen metabolism; urea degradation; CO(2) and NH(3) from urea (urease route): step 1/1. This chain is Urease subunit gamma, found in Pseudoalteromonas translucida (strain TAC 125).